The primary structure comprises 251 residues: tRNA (guanine-N(7)-)-methyltransferase (251 aa).

The interval 1–43 (MQPNEQPGTGPADTTLEQQDTAAAEVGHPRRIRSFVRRAGRTS) is disordered. The span at 29-40 (PRRIRSFVRRAG) shows a compositional bias: basic residues. Glu-82, Glu-107, Asp-134, and Asp-157 together coordinate S-adenosyl-L-methionine. The active site involves Asp-157. Lys-161 is a substrate binding site. Residues 163 to 168 (RHNKRR) are interaction with RNA. Substrate is bound by residues Asp-193 and 228–231 (TKFE).

Belongs to the class I-like SAM-binding methyltransferase superfamily. TrmB family.

The catalysed reaction is guanosine(46) in tRNA + S-adenosyl-L-methionine = N(7)-methylguanosine(46) in tRNA + S-adenosyl-L-homocysteine. It functions in the pathway tRNA modification; N(7)-methylguanine-tRNA biosynthesis. Its function is as follows. Catalyzes the formation of N(7)-methylguanine at position 46 (m7G46) in tRNA. In Ralstonia nicotianae (strain ATCC BAA-1114 / GMI1000) (Ralstonia solanacearum), this protein is tRNA (guanine-N(7)-)-methyltransferase.